A 92-amino-acid polypeptide reads, in one-letter code: DNA/RNA-binding protein Alba (92 aa).

N6-acetyllysine is present on Lys11.

The protein belongs to the histone-like Alba family. Acetylated. Acetylation at Lys-11 decreases DNA-binding affinity.

The protein localises to the cytoplasm. Its subcellular location is the chromosome. Binds double-stranded DNA tightly but without sequence specificity. Involved in DNA compaction. In Pyrobaculum calidifontis (strain DSM 21063 / JCM 11548 / VA1), this protein is DNA/RNA-binding protein Alba.